Here is a 320-residue protein sequence, read N- to C-terminus: Quinolinate synthase (320 aa).

Positions 34 and 51 each coordinate iminosuccinate. Position 96 (Cys96) interacts with [4Fe-4S] cluster. Residues 122 to 124 (YIN) and Ser139 contribute to the iminosuccinate site. Cys182 is a [4Fe-4S] cluster binding site. Iminosuccinate contacts are provided by residues 208-210 (HPE) and Thr225. Cys276 is a binding site for [4Fe-4S] cluster.

It belongs to the quinolinate synthase family. Type 2 subfamily. It depends on [4Fe-4S] cluster as a cofactor.

The protein localises to the cytoplasm. It catalyses the reaction iminosuccinate + dihydroxyacetone phosphate = quinolinate + phosphate + 2 H2O + H(+). The protein operates within cofactor biosynthesis; NAD(+) biosynthesis; quinolinate from iminoaspartate: step 1/1. Catalyzes the condensation of iminoaspartate with dihydroxyacetone phosphate to form quinolinate. The polypeptide is Quinolinate synthase (Synechococcus sp. (strain ATCC 27144 / PCC 6301 / SAUG 1402/1) (Anacystis nidulans)).